A 477-amino-acid polypeptide reads, in one-letter code: 3-isopropylmalate dehydratase large subunit (477 aa).

3 residues coordinate [4Fe-4S] cluster: Cys347, Cys407, and Cys410. Residues 418 to 442 (LAPGERSASTSNRNFEGRQGKGGRT) form a disordered region.

It belongs to the aconitase/IPM isomerase family. LeuC type 1 subfamily. Heterodimer of LeuC and LeuD. Requires [4Fe-4S] cluster as cofactor.

It catalyses the reaction (2R,3S)-3-isopropylmalate = (2S)-2-isopropylmalate. Its pathway is amino-acid biosynthesis; L-leucine biosynthesis; L-leucine from 3-methyl-2-oxobutanoate: step 2/4. Its function is as follows. Catalyzes the isomerization between 2-isopropylmalate and 3-isopropylmalate, via the formation of 2-isopropylmaleate. The polypeptide is 3-isopropylmalate dehydratase large subunit (Streptomyces avermitilis (strain ATCC 31267 / DSM 46492 / JCM 5070 / NBRC 14893 / NCIMB 12804 / NRRL 8165 / MA-4680)).